The chain runs to 948 residues: Sensor histidine kinase RcsC (948 aa).

Residues 1 to 20 (MKYLASFRTTLKVSRYLFRA) are Cytoplasmic-facing. A helical membrane pass occupies residues 21-41 (LALLIWLLIAFVSVFYIVNAL). The Periplasmic segment spans residues 42 to 313 (HQRESEIRQE…PVDLVLERIR (272 aa)). Residues 314–334 (ILILNAILLNVLVGAGLFTLA) form a helical membrane-spanning segment. At 335–948 (RMYERRIFIP…YAERVRKTRA (614 aa)) the chain is on the cytoplasmic side. Residues 357 to 425 (QFNRKIVASA…VLTSNNTNLQ (69 aa)) enclose the PAS domain. The Histidine kinase domain occupies 476–692 (TVSHELRTPL…QFTLRIPLYG (217 aa)). A Phosphohistidine; by autocatalysis modification is found at H479. The region spanning 705 to 805 (AGTCCWLAVR…ARIYSIELDS (101 aa)) is the ABL domain. The region spanning 826–940 (MILVVDDHPI…ALKQTLAVYA (115 aa)) is the Response regulatory domain. The residue at position 875 (D875) is a 4-aspartylphosphate.

This sequence belongs to the RcsC family. As to quaternary structure, interacts with RcsD. In terms of processing, autophosphorylated. Activation probably requires a transfer of a phosphate group from a His in the transmitter domain to an Asp in the receiver domain.

Its subcellular location is the cell inner membrane. The enzyme catalyses ATP + protein L-histidine = ADP + protein N-phospho-L-histidine.. Its function is as follows. Component of the Rcs signaling system, which controls transcription of numerous genes. RcsC functions as a membrane-associated protein kinase that phosphorylates RcsD in response to environmental signals. The phosphoryl group is then transferred to the response regulator RcsB. This is Sensor histidine kinase RcsC from Salmonella typhi.